A 316-amino-acid chain; its full sequence is Coproporphyrin III ferrochelatase (316 aa).

Fe-coproporphyrin III is bound by residues Tyr-13, Arg-30, 46-47, Ser-54, and Tyr-125; that span reads RY. Residues His-183 and Glu-264 each contribute to the Fe(2+) site.

This sequence belongs to the ferrochelatase family.

It is found in the cytoplasm. It catalyses the reaction Fe-coproporphyrin III + 2 H(+) = coproporphyrin III + Fe(2+). The protein operates within porphyrin-containing compound metabolism; protoheme biosynthesis. Involved in coproporphyrin-dependent heme b biosynthesis. Catalyzes the insertion of ferrous iron into coproporphyrin III to form Fe-coproporphyrin III. The protein is Coproporphyrin III ferrochelatase of Geobacillus thermodenitrificans (strain NG80-2).